A 222-amino-acid polypeptide reads, in one-letter code: Glutathione S-transferase U21 (222 aa).

The GST N-terminal domain maps to 3–83; that stretch reads AEVILLGFWP…YIDEVWSDNN (81 aa). Glutathione is bound by residues 13-14, 40-41, 54-55, and 67-68; these read SM, NK, TI, and ES. Residues 89-211 form the GST C-terminal domain; it reads DPYHRAQALF…LPDSEKVVGY (123 aa).

It belongs to the GST superfamily. Tau family.

It localises to the cytoplasm. It is found in the cytosol. The enzyme catalyses RX + glutathione = an S-substituted glutathione + a halide anion + H(+). Functionally, may be involved in the conjugation of reduced glutathione to a wide number of exogenous and endogenous hydrophobic electrophiles and have a detoxification role against certain herbicides. The chain is Glutathione S-transferase U21 (GSTU21) from Arabidopsis thaliana (Mouse-ear cress).